The following is a 399-amino-acid chain: S-adenosylmethionine synthase (399 aa).

His-16 is a binding site for ATP. Asp-18 contributes to the Mg(2+) binding site. Residue Glu-44 coordinates K(+). Glu-57 and Gln-100 together coordinate L-methionine. The segment at 100–110 (QSPDIAQGVDD) is flexible loop. Residues 174-176 (DAK), 241-242 (RF), Asp-250, 256-257 (RK), Ala-273, and Lys-277 contribute to the ATP site. Asp-250 serves as a coordination point for L-methionine. Lys-281 is a binding site for L-methionine.

This sequence belongs to the AdoMet synthase family. In terms of assembly, homotetramer; dimer of dimers. The cofactor is Mg(2+). Requires K(+) as cofactor.

Its subcellular location is the cytoplasm. It catalyses the reaction L-methionine + ATP + H2O = S-adenosyl-L-methionine + phosphate + diphosphate. It participates in amino-acid biosynthesis; S-adenosyl-L-methionine biosynthesis; S-adenosyl-L-methionine from L-methionine: step 1/1. Functionally, catalyzes the formation of S-adenosylmethionine (AdoMet) from methionine and ATP. The overall synthetic reaction is composed of two sequential steps, AdoMet formation and the subsequent tripolyphosphate hydrolysis which occurs prior to release of AdoMet from the enzyme. The sequence is that of S-adenosylmethionine synthase from Latilactobacillus sakei subsp. sakei (strain 23K) (Lactobacillus sakei subsp. sakei).